We begin with the raw amino-acid sequence, 108 residues long: uncharacterized protein (108 aa).

The helical transmembrane segment at 25 to 45 (VILKSFLLISSWVILVLLLVI) threads the bilayer.

The protein localises to the membrane. This is an uncharacterized protein from Saccharomyces cerevisiae (strain ATCC 204508 / S288c) (Baker's yeast).